A 129-amino-acid polypeptide reads, in one-letter code: Large ribosomal subunit protein bL12c (129 aa).

The protein belongs to the bacterial ribosomal protein bL12 family. In terms of assembly, homodimer. Part of the ribosomal stalk of the 50S ribosomal subunit. Forms a multimeric L10(L12)X complex, where L10 forms an elongated spine to which 2 to 4 L12 dimers bind in a sequential fashion. Binds GTP-bound translation factors.

The protein resides in the plastid. The protein localises to the chloroplast. Its function is as follows. Forms part of the ribosomal stalk which helps the ribosome interact with GTP-bound translation factors. Is thus essential for accurate translation. This is Large ribosomal subunit protein bL12c from Porphyra purpurea (Red seaweed).